We begin with the raw amino-acid sequence, 319 residues long: Taste receptor type 2 member 30 (319 aa).

Residue Met-1 is a topological domain, extracellular. Residues 2–22 (ITFLPIIFSILIVVIFVIGNF) traverse the membrane as a helical segment. Topologically, residues 23–46 (ANGFIALVNSIEWVKRQKISFADQ) are cytoplasmic. The helical transmembrane segment at 47-67 (ILIALAVSRVGLLWALLLHWY) threads the bilayer. Residues 68–86 (ATELNLAFYSVEVRITAYN) lie on the Extracellular side of the membrane. Residues 87-107 (VWAVTNHFSNWLATSLSMFYL) form a helical membrane-spanning segment. The Cytoplasmic segment spans residues 108-126 (LKIANFSNLIFLRIKRRVK). The helical transmembrane segment at 127-147 (SVILVILLGPLLFLVCHLFVI) threads the bilayer. At 148–178 (NMNEIVWTKEYEGNLTWKIKLRNAVFLSNMT) the chain is on the extracellular side. Residues Asn-161 and Asn-176 are each glycosylated (N-linked (GlcNAc...) asparagine). The helical transmembrane segment at 179 to 199 (LTMLANFVPLTLTLISFLLLI) threads the bilayer. At 200-229 (CSLCKHLKKMQLHGKGSQDPSTKVHIKALQ) the chain is on the cytoplasmic side. The chain crosses the membrane as a helical span at residues 230 to 250 (TVTCFLLLCAIYFLSMIISVY). The Extracellular segment spans residues 251-259 (NFGRLEKKP). The chain crosses the membrane as a helical span at residues 260 to 280 (VFMFCQAITFSYPSTHAFILI). Topologically, residues 281 to 319 (WGNKKLKQIFLSVLWHVRYWVKDRSLRLHRFTRAALCKG) are cytoplasmic.

The protein belongs to the G-protein coupled receptor T2R family.

It is found in the membrane. Receptor that may play a role in the perception of bitterness and is gustducin-linked. May play a role in sensing the chemical composition of the gastrointestinal content. The activity of this receptor may stimulate alpha gustducin, mediate PLC-beta-2 activation and lead to the gating of TRPM5. The protein is Taste receptor type 2 member 30 (TAS2R30) of Pongo pygmaeus (Bornean orangutan).